A 354-amino-acid polypeptide reads, in one-letter code: 5,10-methenyltetrahydromethanopterin hydrogenase (354 aa).

This sequence belongs to the HMD family.

The enzyme catalyses 5,10-methenyl-5,6,7,8-tetrahydromethanopterin + H2 = 5,10-methylenetetrahydromethanopterin + H(+). It functions in the pathway one-carbon metabolism; methanogenesis from CO(2); 5,10-methylene-5,6,7,8-tetrahydromethanopterin from 5,10-methenyl-5,6,7,8-tetrahydromethanopterin (hydrogen route): step 1/1. Functionally, catalyzes the reversible reduction of methenyl-H(4)MPT(+) to methylene-H(4)MPT. In Methanococcus maripaludis (strain C7 / ATCC BAA-1331), this protein is 5,10-methenyltetrahydromethanopterin hydrogenase.